We begin with the raw amino-acid sequence, 523 residues long: 2,3-bisphosphoglycerate-independent phosphoglycerate mutase (523 aa).

Positions 13 and 63 each coordinate Mn(2+). Serine 63 functions as the Phosphoserine intermediate in the catalytic mechanism. Substrate is bound by residues histidine 124, 156-157 (RD), arginine 188, arginine 194, 268-271 (RSDR), and lysine 341. Aspartate 408, histidine 412, aspartate 449, histidine 450, and histidine 467 together coordinate Mn(2+).

The protein belongs to the BPG-independent phosphoglycerate mutase family. In terms of assembly, monomer. The cofactor is Mn(2+).

The enzyme catalyses (2R)-2-phosphoglycerate = (2R)-3-phosphoglycerate. It participates in carbohydrate degradation; glycolysis; pyruvate from D-glyceraldehyde 3-phosphate: step 3/5. Functionally, catalyzes the interconversion of 2-phosphoglycerate and 3-phosphoglycerate. The polypeptide is 2,3-bisphosphoglycerate-independent phosphoglycerate mutase (Salinibacter ruber (strain DSM 13855 / M31)).